A 759-amino-acid polypeptide reads, in one-letter code: Holliday junction resolvase YEN1 (759 aa).

Disordered stretches follow at residues 62-83 (RSRSRSPTRSPRDSDIDSSQEY), 498-518 (SQSPLKRSNSPSRSKSPTRRQ), and 683-702 (KSRTTNAEKNPPESGLKSRS). Residues 500–512 (SPLKRSNSPSRSK) are compositionally biased toward low complexity. Phosphoserine occurs at positions 730 and 731.

This sequence belongs to the XPG/RAD2 endonuclease family. GEN subfamily.

The protein localises to the cytoplasm. It is found in the nucleus. Its function is as follows. Endonuclease which resolves Holliday junctions by the introduction of symmetrically related cuts across the junction point, to produce nicked duplex products in which the nicks can be readily ligated. Four-way DNA intermediates, also known as Holliday junctions, are formed during homologous recombination and DNA repair, and their resolution is necessary for proper chromosome segregation. Involved in DNA-damage repair in vegetative cells. The sequence is that of Holliday junction resolvase YEN1 (YEN1) from Saccharomyces cerevisiae (strain ATCC 204508 / S288c) (Baker's yeast).